A 1795-amino-acid polypeptide reads, in one-letter code: Putative surface cell antigen sca2 (1795 aa).

Positions 1 to 33 (MNLQNSHSKKYVLTFFMSTCLLTSSFLSTSARA) are cleaved as a signal peptide. Positions 360-373 (FLNNNDTTKPSTGR) are enriched in polar residues. 3 disordered regions span residues 360 to 391 (FLNNNDTTKPSTGRSQKKSGSKNDHWYMSNQS), 664 to 709 (LEQT…SSNS), and 1354 to 1441 (KQEN…DEEL). Positions 672–700 (PNPPPLPLNGGIPNPPPLPLNGSMPPPPL) are enriched in pro residues. Basic and acidic residues-rich tracts occupy residues 1364–1383 (SSTKDDTQPEDSNKKSEQSD) and 1398–1409 (SKNDKSSDDKKS). Residues 1417 to 1432 (DEDDTGYATDEEELEE) are compositionally biased toward acidic residues. The region spanning 1516 to 1795 (ETSINRGVWI…QGLIKLKVNL (280 aa)) is the Autotransporter domain.

The protein resides in the cell outer membrane. In Rickettsia conorii (strain ATCC VR-613 / Malish 7), this protein is Putative surface cell antigen sca2 (sca2).